Here is a 251-residue protein sequence, read N- to C-terminus: Eukaryotic translation initiation factor 3 subunit K (251 aa).

Residues 46–224 (FDCYANLALL…VKVPTNKENE (179 aa)) form the PCI domain.

This sequence belongs to the eIF-3 subunit K family. As to quaternary structure, component of the eukaryotic translation initiation factor 3 (eIF-3) complex.

It localises to the cytoplasm. Functionally, component of the eukaryotic translation initiation factor 3 (eIF-3) complex, which is involved in protein synthesis of a specialized repertoire of mRNAs and, together with other initiation factors, stimulates binding of mRNA and methionyl-tRNAi to the 40S ribosome. The eIF-3 complex specifically targets and initiates translation of a subset of mRNAs involved in cell proliferation. The sequence is that of Eukaryotic translation initiation factor 3 subunit K from Aspergillus oryzae (strain ATCC 42149 / RIB 40) (Yellow koji mold).